The primary structure comprises 622 residues: Chaperone protein HscA homolog (622 aa).

This sequence belongs to the heat shock protein 70 family.

Chaperone involved in the maturation of iron-sulfur cluster-containing proteins. Has a low intrinsic ATPase activity which is markedly stimulated by HscB. The polypeptide is Chaperone protein HscA homolog (Burkholderia pseudomallei (strain 1710b)).